Consider the following 375-residue polypeptide: UDP-N-acetylglucosamine--N-acetylmuramyl-(pentapeptide) pyrophosphoryl-undecaprenol N-acetylglucosamine transferase (375 aa).

UDP-N-acetyl-alpha-D-glucosamine contacts are provided by residues 15-17 (TGG), asparagine 126, arginine 169, serine 197, and glutamine 298.

The protein belongs to the glycosyltransferase 28 family. MurG subfamily.

The protein resides in the cell inner membrane. The enzyme catalyses di-trans,octa-cis-undecaprenyl diphospho-N-acetyl-alpha-D-muramoyl-L-alanyl-D-glutamyl-meso-2,6-diaminopimeloyl-D-alanyl-D-alanine + UDP-N-acetyl-alpha-D-glucosamine = di-trans,octa-cis-undecaprenyl diphospho-[N-acetyl-alpha-D-glucosaminyl-(1-&gt;4)]-N-acetyl-alpha-D-muramoyl-L-alanyl-D-glutamyl-meso-2,6-diaminopimeloyl-D-alanyl-D-alanine + UDP + H(+). It functions in the pathway cell wall biogenesis; peptidoglycan biosynthesis. In terms of biological role, cell wall formation. Catalyzes the transfer of a GlcNAc subunit on undecaprenyl-pyrophosphoryl-MurNAc-pentapeptide (lipid intermediate I) to form undecaprenyl-pyrophosphoryl-MurNAc-(pentapeptide)GlcNAc (lipid intermediate II). This is UDP-N-acetylglucosamine--N-acetylmuramyl-(pentapeptide) pyrophosphoryl-undecaprenol N-acetylglucosamine transferase from Rhodopseudomonas palustris (strain BisB18).